We begin with the raw amino-acid sequence, 267 residues long: Translation initiation factor 2 subunit alpha (267 aa).

One can recognise an S1 motif domain in the interval 17 to 88 (GEIVIGTVKR…KRGHIDLSIK (72 aa)).

The protein belongs to the eIF-2-alpha family. As to quaternary structure, heterotrimer composed of an alpha, a beta and a gamma chain.

In terms of biological role, eIF-2 functions in the early steps of protein synthesis by forming a ternary complex with GTP and initiator tRNA. The sequence is that of Translation initiation factor 2 subunit alpha (eif2a) from Archaeoglobus fulgidus (strain ATCC 49558 / DSM 4304 / JCM 9628 / NBRC 100126 / VC-16).